The primary structure comprises 316 residues: MAATKDRQLFRHLLRLSRFDRYNPLFTTFAGLWSTLLAGGAKMAEQRSDMSVATVFQQCALCFVASYLFCGAGMVWNDWIDRDIDANVARTKERPLASGKVTATEAMVWMVLQAALSWGVLEVMLDGKDVAKHFIPVAAASVLYPFGKRSLARMLGIYPQYILAFTIAWPAVIGRAAIYGQYESYAETLRQCLPLCTMVFFWTIYLNTAYSYQDVVDDRKLGVNSFYNIAGKHIHLLLVALVSPILVCLPIYLFELHSLWLWLSWMGVWTASLAQQLVQFDPKQPASGGSIHRSNFILGIWTILACVVQVFLTGSA.

The next 8 membrane-spanning stretches (helical) occupy residues 24–44 (PLFTTFAGLWSTLLAGGAKMA), 60–80 (ALCFVASYLFCGAGMVWNDWI), 105–125 (EAMVWMVLQAALSWGVLEVML), 154–174 (MLGIYPQYILAFTIAWPAVIG), 192–212 (CLPLCTMVFFWTIYLNTAYSY), 234–254 (IHLLLVALVSPILVCLPIYLF), 258–278 (SLWLWLSWMGVWTASLAQQLV), and 296–316 (FILGIWTILACVVQVFLTGSA).

Belongs to the UbiA prenyltransferase family. Mg(2+) serves as cofactor.

The protein resides in the membrane. The protein operates within secondary metabolite biosynthesis; terpenoid biosynthesis. In terms of biological role, polyprenyl transferase; part of the gene cluster that mediates the biosynthesis of the diterpenoid pyrones higginsianins A and B. The first step of the pathway is the synthesis of the alpha-pyrone moiety by the polyketide synthase dpchA via condensation of one acetyl-CoA starter unit with 3 malonyl-CoA units and 2 methylations. The alpha-pyrone is then combined with geranylgeranyl pyrophosphate (GGPP) formed by the GGPP synthase dpchD through the action of the prenyltransferase dpchC to yield a linear alpha-pyrone diterpenoid. Subsequent steps in the diterpenoid pyrone biosynthetic pathway involve the decalin core formation, which is initiated by the epoxidation of the C10-C11 olefin by the FAD-dependent oxidoreductase dpchE, and is followed by a cyclization cascade catalyzed by the terpene cyclase dpchB. The short chain dehydrogenase/reductase dpchG then oxidizes the 8S hydroxy group to a ketone and the short chain dehydrogenase/reductase dpchH reduces the ketone to the 8R hydroxy group to yield higginsianin B. Finally, the FAD-dependent oxidoreductase dpchF converts higginsianin B into higginsianin A. In Colletotrichum higginsianum (strain IMI 349063) (Crucifer anthracnose fungus), this protein is Polyprenyl transferase dpchC.